A 474-amino-acid chain; its full sequence is ATP synthase subunit beta (474 aa).

152-159 (GGAGVGKT) serves as a coordination point for ATP.

It belongs to the ATPase alpha/beta chains family. F-type ATPases have 2 components, CF(1) - the catalytic core - and CF(0) - the membrane proton channel. CF(1) has five subunits: alpha(3), beta(3), gamma(1), delta(1), epsilon(1). CF(0) has four main subunits: a(1), b(1), b'(1) and c(9-12).

It is found in the cell inner membrane. It catalyses the reaction ATP + H2O + 4 H(+)(in) = ADP + phosphate + 5 H(+)(out). Produces ATP from ADP in the presence of a proton gradient across the membrane. The catalytic sites are hosted primarily by the beta subunits. This Rhodospirillum rubrum (strain ATCC 11170 / ATH 1.1.1 / DSM 467 / LMG 4362 / NCIMB 8255 / S1) protein is ATP synthase subunit beta.